A 195-amino-acid chain; its full sequence is MKLMALQLLLWHIALWMVPEAAPLSPASSLPQSFLLKCLEQVRKIQADGAELQERLCATHKLCHPQELVLLGHSLGLPQASLSSCSSQALQLTGCLNQLHGGLVLYQGLLQALAGISPELAPALDILQLDVTDLATNIWLQMEDLRMAPASLPTQGTVPTFTSAFQRRAGGVLVVSQLQSFLELAYRVLRYLAEP.

Residues Met-1–Ala-21 form the signal peptide. Intrachain disulfides connect Cys-57-Cys-63 and Cys-85-Cys-95. O-linked (GalNAc...) threonine glycosylation is present at Thr-154.

This sequence belongs to the IL-6 superfamily. As to quaternary structure, monomer. O-glycosylated.

The protein localises to the secreted. In terms of biological role, granulocyte/macrophage colony-stimulating factors are cytokines that act in hematopoiesis by controlling the production, differentiation, and function of 2 related white cell populations of the blood, the granulocytes and the monocytes-macrophages. This CSF induces granulocytes. The protein is Granulocyte colony-stimulating factor (CSF3) of Sus scrofa (Pig).